Here is a 591-residue protein sequence, read N- to C-terminus: Aspartate--tRNA(Asp/Asn) ligase (591 aa).

Glutamate 176 serves as a coordination point for L-aspartate. The tract at residues 200–203 (QLFK) is aspartate. Arginine 222 serves as a coordination point for L-aspartate. ATP-binding positions include 222-224 (RDE) and glutamine 231. Histidine 450 lines the L-aspartate pocket. An ATP-binding site is contributed by glutamate 484. Arginine 491 lines the L-aspartate pocket. 536-539 (GLDR) serves as a coordination point for ATP.

The protein belongs to the class-II aminoacyl-tRNA synthetase family. Type 1 subfamily. In terms of assembly, homodimer.

The protein resides in the cytoplasm. It carries out the reaction tRNA(Asx) + L-aspartate + ATP = L-aspartyl-tRNA(Asx) + AMP + diphosphate. Functionally, aspartyl-tRNA synthetase with relaxed tRNA specificity since it is able to aspartylate not only its cognate tRNA(Asp) but also tRNA(Asn). Reaction proceeds in two steps: L-aspartate is first activated by ATP to form Asp-AMP and then transferred to the acceptor end of tRNA(Asp/Asn). In Bacillus mycoides (strain KBAB4) (Bacillus weihenstephanensis), this protein is Aspartate--tRNA(Asp/Asn) ligase.